A 383-amino-acid polypeptide reads, in one-letter code: Probable disease resistance protein At4g19060 (383 aa).

Residues 36-84 form a disordered region; it reads YEKWSSGKQRGSSSKHGNQSTHGDSSPTRNSSGSSKKGRPKANRVETSS. Positions 41–70 are enriched in polar residues; that stretch reads SGKQRGSSSKHGNQSTHGDSSPTRNSSGSS. 2 consecutive NB-ARC domains span residues 75–184 and 207–281; these read PKAN…MFKH and VKEK…LAKA. Residue 121–128 coordinates ATP; that stretch reads GKYGVGKT.

Its function is as follows. Possible disease resistance protein. This chain is Probable disease resistance protein At4g19060, found in Arabidopsis thaliana (Mouse-ear cress).